The primary structure comprises 532 residues: Di/tripeptide-binding protein 2 (532 aa).

The signal sequence occupies residues 1–24; sequence MRPRSALRYSLLLLAFAASAAIQA.

The protein belongs to the bacterial solute-binding protein 5 family. In terms of assembly, the complex is composed of two ATP-binding proteins (DppD and DppF), two transmembrane proteins (DppB and DppC) and a solute-binding protein (DppA2). Five orthologous SBPs (DppA1-A5) are present in P.aeruginosa, which increases the substrate specificity of the DppBCDF transporter.

Its function is as follows. Part of the ABC transporter DppABCDF involved in the uptake of various di/tripeptides. Shows high flexibility on substrate recognition. Efficiently uses tripeptides. This chain is Di/tripeptide-binding protein 2, found in Pseudomonas aeruginosa (strain UCBPP-PA14).